Reading from the N-terminus, the 199-residue chain is Prolactin-1 (199 aa).

Cystine bridges form between C4–C11, C58–C174, and C191–C199. N60 carries an N-linked (GlcNAc...) asparagine glycan.

Belongs to the somatotropin/prolactin family. In terms of processing, glycosylated.

The protein localises to the secreted. In Crocodylus novaeguineae (Crocodile), this protein is Prolactin-1.